We begin with the raw amino-acid sequence, 583 residues long: Chloroplast sensor kinase, chloroplastic (583 aa).

The transit peptide at methionine 1–valine 50 directs the protein to the chloroplast. Positions leucine 97–glutamine 277 are GAF. Cysteine 115 contacts [3Fe-4S] cluster. The residue at position 292 (histidine 292) is a Phosphohistidine; by autocatalysis. The tract at residues alanine 412–alanine 442 is disordered. Low complexity predominate over residues serine 414–serine 431. The Histidine kinase domain occupies serine 447 to tryptophan 583.

The protein belongs to the chloroplast sensor kinase protein family. In terms of assembly, oligomerizes. Requires [3Fe-4S] cluster as cofactor. Autophosphorylates, possibly on His-292.

The protein localises to the plastid. The protein resides in the chloroplast stroma. The enzyme catalyses ATP + protein L-histidine = ADP + protein N-phospho-L-histidine.. In terms of biological role, sensor kinase that senses the plastoquinone (PQ) redox state involved in stoichiometry adjustment of both photosystems (e.g. long-term adaptation via transcriptional regulation of reaction center genes of photosystems I and II) and state transitions (e.g. short-term adaptation involving reversible post-translational phosphorylation of light-harvesting complex II, LHC II), thus linking photosynthesis with gene expression in chloroplasts. Reduced PQ suppresses its autophosphorylation activity. In Phaeodactylum tricornutum (strain CCAP 1055/1), this protein is Chloroplast sensor kinase, chloroplastic.